The primary structure comprises 649 residues: MITLSKSQEEVFKKLAVELSMSKLIEACNKSVDFSSLNSNEQLDVLKVTNAFYRSAEQIINDSTYDAFLSEFSTYNPDHPYLLTVEPEVLADSKTVPLPKKMLSTDKAYSFEEIKKWIDRLLKAAIEVGVSESEIQIKVTPKLDGYAAYDDGISLYTRGDGARGQDITRAFNKGLQVANNGDRGLGPGEIVIKKSYFDTVLSDKFENSRNIQAAIIAEKKVDESIQKAIDVGACVFFPFLSLENWIGHYTEILVDFESIVEKMWSAVDYDIDGVVLEVTNETLKEHMGATRHHHRWQIAFKVNAESAEVKVLNVTPQTSRTGRVTPVAELEPTKLSGATISRATVHHYNMVKTNGVGPGAIVQLVRSGLVIPKIEKVIKAVEPQLAKECPSCGTHLIWESDHLVCPNKTDCPAQTENTLVHFFKTLGNNDGFGPKVIEKLHEFGIKKIHEIYELKQESFVSFGFGDKTAQNLVEQLQVSRDVEIEDWRFLAAFGVSRLAGGNCEKLLQHHSLDSLFEATVEDLVQLDGFAQVSADAIVEGLANIKEEFLKLSALNFNLTITPKASEKSPGETPVFGKIIVFTGAMTQGSRGDMEKQAKALGAKVAKSVTGKTSLLVTGDKVGANKINAARDKGVQVLSELDYLALISTY.

NAD(+) contacts are provided by residues 62–66 and 104–105; these read DSTYD and ST. The active-site N6-AMP-lysine intermediate is Lys-142. Residues Arg-158, Glu-189, and Lys-301 each coordinate NAD(+). 4 residues coordinate Zn(2+): Cys-389, Cys-392, Cys-405, and Cys-411. Residues 569–649 form the BRCT domain; sequence PGETPVFGKI…LDYLALISTY (81 aa).

The protein belongs to the NAD-dependent DNA ligase family. LigA subfamily. The cofactor is Mg(2+). Mn(2+) serves as cofactor.

It catalyses the reaction NAD(+) + (deoxyribonucleotide)n-3'-hydroxyl + 5'-phospho-(deoxyribonucleotide)m = (deoxyribonucleotide)n+m + AMP + beta-nicotinamide D-nucleotide.. Its function is as follows. DNA ligase that catalyzes the formation of phosphodiester linkages between 5'-phosphoryl and 3'-hydroxyl groups in double-stranded DNA using NAD as a coenzyme and as the energy source for the reaction. It is essential for DNA replication and repair of damaged DNA. The protein is DNA ligase of Psychromonas ingrahamii (strain DSM 17664 / CCUG 51855 / 37).